Consider the following 672-residue polypeptide: DNA polymerase eta (672 aa).

Residues Ile-14–Gly-254 enclose the UmuC domain. 2 residues coordinate Mg(2+): Asp-18 and Met-19. Residues Asp-18 and Met-19 each contribute to the Mn(2+) site. A 2'-deoxyribonucleoside 5'-triphosphate is bound by residues Tyr-23 and Arg-60. The Mg(2+) site is built by Asp-120 and Glu-121. Residues Asp-120 and Glu-121 each coordinate Mn(2+). Glu-121 functions as the Proton acceptor in the catalytic mechanism. DNA-binding stretches follow at residues Lys-318–Ala-325 and Thr-362–Ser-383. 2 disordered regions span residues Val-521–Gly-617 and Gln-648–Arg-672. Polar residues-rich tracts occupy residues Cys-523–Lys-544 and Tyr-570–Val-586. 2 stretches are compositionally biased toward low complexity: residues Ser-587–Ser-602 and Thr-651–Ser-662.

Belongs to the DNA polymerase type-Y family. Interacts with PCNA1 and PCNA2. The interaction with PCNA2 is required for translesion synthesis (TLS) to repair UV photoproducts. The cofactor is Mg(2+). It depends on Mn(2+) as a cofactor. Constitutively expressed in roots, stems, leaves, flowers and siliques.

The protein localises to the nucleus. It catalyses the reaction DNA(n) + a 2'-deoxyribonucleoside 5'-triphosphate = DNA(n+1) + diphosphate. With respect to regulation, the enzyme in complex with the DNA substrate binds a third divalent metal cation. The binding of this third divalent cation, which is coordinated by water molecules and two oxygen atoms from DNA and dNTP, is essential for catalyzing the DNA synthesis. Its function is as follows. Error-free DNA polymerase specifically involved in DNA repair. Plays an important role in translesion synthesis (TLS), where the normal high fidelity DNA polymerases cannot proceed and DNA synthesis stalls. Plays an important role in the repair of UV-induced pyrimidine dimers and confers resistance to ultraviolet light. Depending on the context, it inserts the correct base, but may cause base transitions and transversions. Forms a Schiff base with 5'-deoxyribose phosphate at abasic sites, but does not have lyase activity. Targets POLI to replication foci. Exhibits cyclobutane dimer nonmutagenic bypass activity in vitro. The protein is DNA polymerase eta (POLH) of Arabidopsis thaliana (Mouse-ear cress).